Reading from the N-terminus, the 213-residue chain is MLLQKEREEIVAYGKKMISSGLTKGTGGNISIFNREQGLVAISPSGLEYYETKPEDVVILNLDGEVIEGERKPSSELDMHLIYYRKREDINALVHTHSPYAKTIASLGWELPAVSYLIAFAGPNVRCAPYETFGTKQLADAAFEGMIDRRAVLLANHGLIAGANNIKMAFTVAEEIEFCAQIYYQTKSIGEPKLLPEDEMENLAKKFEGYGQQ.

Substrate is bound by residues 28-29 (GN), 45-46 (SG), and 74-76 (SSE). Glu76 (proton donor/acceptor) is an active-site residue. Mn(2+) contacts are provided by Glu76, His95, His97, and His157.

This sequence belongs to the aldolase class II family. As to quaternary structure, forms homooligomers, possibly homotetramers. Requires Mn(2+) as cofactor.

The enzyme catalyses 5-deoxy-D-ribulose 1-phosphate = dihydroxyacetone phosphate + acetaldehyde. Its pathway is carbohydrate degradation. Its function is as follows. Catalyzes the cleavage of 5-deoxy-D-ribulose 1-phosphate to yield dihydroxyacetone phosphate (DHAP) and acetaldehyde, as part of a 5-deoxyribose salvage pathway that recycles this toxic radical SAM enzyme by-product to mainstream metabolites. Is also able to catalyze the reverse reaction, using several aldehydes as substrate, with acetaldehyde being the preferred substrate. The chain is 5-deoxy-D-ribulose 1-phosphate aldolase from Bacillus thuringiensis serovar kurstaki (strain ATCC 35866 / NRRL B-4488 / HD73).